Here is a 398-residue protein sequence, read N- to C-terminus: Serpin-Z1A (398 aa).

The segment at 343-367 (GTEAAASTAIKMVLQQARPPSVMDF) is RCL.

This sequence belongs to the serpin family.

Its function is as follows. Inhibits chymotrypsin and cathepsin G in vitro. The sequence is that of Serpin-Z1A (WZCI) from Triticum aestivum (Wheat).